A 292-amino-acid polypeptide reads, in one-letter code: Pantothenate synthetase (292 aa).

32–39 lines the ATP pocket; the sequence is MGFLHEGH. Catalysis depends on His39, which acts as the Proton donor. Residue Gln63 coordinates (R)-pantoate. Gln63 lines the beta-alanine pocket. 150–153 is a binding site for ATP; sequence GEKD. A (R)-pantoate-binding site is contributed by Gln156. Residues Val179 and 187-190 contribute to the ATP site; that span reads MSSR.

Belongs to the pantothenate synthetase family. Homodimer.

Its subcellular location is the cytoplasm. The enzyme catalyses (R)-pantoate + beta-alanine + ATP = (R)-pantothenate + AMP + diphosphate + H(+). The protein operates within cofactor biosynthesis; (R)-pantothenate biosynthesis; (R)-pantothenate from (R)-pantoate and beta-alanine: step 1/1. Functionally, catalyzes the condensation of pantoate with beta-alanine in an ATP-dependent reaction via a pantoyl-adenylate intermediate. The sequence is that of Pantothenate synthetase from Myxococcus xanthus (strain DK1622).